Consider the following 204-residue polypeptide: Salt stress root protein RS1 (204 aa).

The disordered stretch occupies residues 128-204 (FVPKEEPKPE…AAPAAEPEKQ (77 aa)). The span at 147–161 (TSREVAVEEEKKEEE) shows a compositional bias: basic and acidic residues. Low complexity predominate over residues 164-180 (PAEPAAAAAEAAAPSTE). The segment covering 182–192 (VEEKKEEEKPA) has biased composition (basic and acidic residues). Positions 193-204 (EAAAPAAEPEKQ) are enriched in low complexity.

It belongs to the DREPP family.

The sequence is that of Salt stress root protein RS1 from Oryza sativa subsp. indica (Rice).